Reading from the N-terminus, the 190-residue chain is Vascular endothelial growth factor A (190 aa).

A signal peptide spans 1-26; that stretch reads MNFLLSWVHWSLALLLYLHHAKWSQA. Intrachain disulfides connect Cys51/Cys93, Cys82/Cys127, and Cys86/Cys129. The N-linked (GlcNAc...) asparagine glycan is linked to Asn100.

Belongs to the PDGF/VEGF growth factor family. As to quaternary structure, homodimer; disulfide-linked. Also found as heterodimer with PGF. Interacts with NRP1. Interacts with BSG. Interacts with CD82; this interaction inhibits VEGFA-mediated signaling pathway.

It localises to the secreted. Growth factor active in angiogenesis, vasculogenesis and endothelial cell growth. Induces endothelial cell proliferation, promotes cell migration, inhibits apoptosis and induces permeabilization of blood vessels. Binds to the FLT1/VEGFR1 and KDR/VEGFR2 receptors, heparan sulfate and heparin. Binding to NRP1 receptor initiates a signaling pathway needed for motor neuron axon guidance and cell body migration, including for the caudal migration of facial motor neurons from rhombomere 4 to rhombomere 6 during embryonic development. Also binds the DEAR/FBXW7-AS1 receptor. This is Vascular endothelial growth factor A (VEGFA) from Sus scrofa (Pig).